Reading from the N-terminus, the 509-residue chain is Maturase K (509 aa).

Belongs to the intron maturase 2 family. MatK subfamily.

The protein resides in the plastid. Its subcellular location is the chloroplast. Functionally, usually encoded in the trnK tRNA gene intron. Probably assists in splicing its own and other chloroplast group II introns. The chain is Maturase K from Anthocercis viscosa (Sticky tailflower).